The primary structure comprises 333 residues: DNA-directed RNA polymerase subunit alpha (333 aa).

The segment at 1–234 (MQSSVNEFLT…QQLAAFVDLK (234 aa)) is alpha N-terminal domain (alpha-NTD). The alpha C-terminal domain (alpha-CTD) stretch occupies residues 248–333 (IDPILLRPVD…SLKKDDKATA (86 aa)).

Belongs to the RNA polymerase alpha chain family. In terms of assembly, homodimer. The RNAP catalytic core consists of 2 alpha, 1 beta, 1 beta' and 1 omega subunit. When a sigma factor is associated with the core the holoenzyme is formed, which can initiate transcription.

The enzyme catalyses RNA(n) + a ribonucleoside 5'-triphosphate = RNA(n+1) + diphosphate. DNA-dependent RNA polymerase catalyzes the transcription of DNA into RNA using the four ribonucleoside triphosphates as substrates. This Pseudomonas putida (Arthrobacter siderocapsulatus) protein is DNA-directed RNA polymerase subunit alpha.